Reading from the N-terminus, the 81-residue chain is MKTLLLTLAAATIVCLDLGYTLKCNKLIPIASKTCPAGMNLCYKMFMMSDLTIPVKRGCIDVCPKNSLLVKYVCCNTDRCN.

The signal sequence occupies residues 1-21; it reads MKTLLLTLAAATIVCLDLGYT. 4 disulfide bridges follow: cysteine 24/cysteine 42, cysteine 35/cysteine 59, cysteine 63/cysteine 74, and cysteine 75/cysteine 80.

It belongs to the three-finger toxin family. Short-chain subfamily. Type IA cytotoxin sub-subfamily. Monomer in solution; Homodimer and oligomer in the presence of negatively charged lipids forming a pore with a size ranging between 20 and 30 Angstroms. As to expression, expressed by the venom gland.

It localises to the secreted. The protein resides in the target cell membrane. Shows cytolytic activity on many different cells by forming pore in lipid membranes. In vivo, increases heart rate or kills the animal by cardiac arrest. In addition, it binds to heparin with high affinity, interacts with Kv channel-interacting protein 1 (KCNIP1) in a calcium-independent manner, and binds to integrin alpha-V/beta-3 (ITGAV/ITGB3) with moderate affinity. This is Cytotoxin I-like P-15 from Naja atra (Chinese cobra).